Consider the following 437-residue polypeptide: MERWQNIHKVVVVGLGITGLSVVKHLTKTQPQLTVKVIDTRATPPGTERLPEQVELHSGGWNTEWLAEADLVVTNPGIALATPEIQEVLAKGAPVVGDIELFAWAVDKPVIAITGSNGKSTVTDLTGVMAKAAGLTVGVGGNIGVPALDLLEQDADLYVLELSSFQLESTLSLKLKAAAFLNLSEDHMDRYEGMSDYRQAKLRIFDNAELAVVNRDDQETFPDTETPLVTFGSDEQAYGLEADGNRTWLLDHGQRVIASDELKLVGKHNLANALVVLALLKAADVDYHKSLNALKTYTGLTHRCQVVADNRGVKWVNDSKATNIASTIAALSGLESTGKLYLLVGGVGKGADFTPLKPIFATLNLQLCCFGADGDEFMPLHESATRFDTMEDVIQQISSQLKTGDMVMLSPACASFDQFDNFMARGDAFAALAEKYA.

ATP is bound at residue 115–121; that stretch reads GSNGKST.

Belongs to the MurCDEF family.

It localises to the cytoplasm. It carries out the reaction UDP-N-acetyl-alpha-D-muramoyl-L-alanine + D-glutamate + ATP = UDP-N-acetyl-alpha-D-muramoyl-L-alanyl-D-glutamate + ADP + phosphate + H(+). It functions in the pathway cell wall biogenesis; peptidoglycan biosynthesis. In terms of biological role, cell wall formation. Catalyzes the addition of glutamate to the nucleotide precursor UDP-N-acetylmuramoyl-L-alanine (UMA). This is UDP-N-acetylmuramoylalanine--D-glutamate ligase from Vibrio campbellii (strain ATCC BAA-1116).